The following is a 100-amino-acid chain: Integration host factor subunit alpha (100 aa).

The segment at 53-73 is disordered; that stretch reads FDLRDKRQRPGRNPKTGEEIP.

This sequence belongs to the bacterial histone-like protein family. As to quaternary structure, heterodimer of an alpha and a beta chain.

In terms of biological role, this protein is one of the two subunits of integration host factor, a specific DNA-binding protein that functions in genetic recombination as well as in transcriptional and translational control. This chain is Integration host factor subunit alpha, found in Pseudomonas aeruginosa (strain LESB58).